A 259-amino-acid chain; its full sequence is MKHAEMTGQIIGIIPARYGSTRFPGKPLASILGKTLLQRTYENSLRASALSDLIVATDDERIFEHVRSFNGKVVMTSEQCPTGTDRLAEVLSLYPEWMHATAIVNIQGDEPCLNPLTINLAVQALVNDPQGQVSTIVTPLLDEEEAKNSSIVKCVMDQQGNALYFSRALIPSNKTNSFKNGAIYFRHLGLYVYRPSFIINYQKLPSTPLQLEEDLEQLKVLEHGYRIKVAIVDQANIGVDTPEDIHKVEEWLCKQNTFL.

It belongs to the KdsB family.

It is found in the cytoplasm. It carries out the reaction 3-deoxy-alpha-D-manno-oct-2-ulosonate + CTP = CMP-3-deoxy-beta-D-manno-octulosonate + diphosphate. The protein operates within nucleotide-sugar biosynthesis; CMP-3-deoxy-D-manno-octulosonate biosynthesis; CMP-3-deoxy-D-manno-octulosonate from 3-deoxy-D-manno-octulosonate and CTP: step 1/1. Its pathway is bacterial outer membrane biogenesis; lipopolysaccharide biosynthesis. Its function is as follows. Activates KDO (a required 8-carbon sugar) for incorporation into bacterial lipopolysaccharide in Gram-negative bacteria. This chain is 3-deoxy-manno-octulosonate cytidylyltransferase, found in Protochlamydia amoebophila (strain UWE25).